The primary structure comprises 1235 residues: DNA polymerase catalytic subunit (1235 aa).

2 disordered regions span residues 640–693 and 1098–1134; these read QGRF…AGRH and AAAP…ASKP. Positions 650 to 661 are enriched in basic and acidic residues; that stretch reads APKRPAAAREDE. Residues 662–675 show a composition bias toward acidic residues; the sequence is ERPEEEGEDEDERE. Over residues 676–691 the composition is skewed to basic and acidic residues; it reads EGGGEREPEGARETAG.

The protein belongs to the DNA polymerase type-B family. As to quaternary structure, forms a complex with the ssDNA-binding protein UL29, the DNA polymerase processivity factor, and the alkaline exonuclease. Interacts with the putative helicase-primase complex subunit UL8; this interaction may coordinate leading and lagging strand DNA synthesis at the replication fork.

It is found in the host nucleus. It catalyses the reaction DNA(n) + a 2'-deoxyribonucleoside 5'-triphosphate = DNA(n+1) + diphosphate. It carries out the reaction Endonucleolytic cleavage to 5'-phosphomonoester.. In terms of biological role, replicates viral genomic DNA. The replication complex is composed of six viral proteins: the DNA polymerase, processivity factor, primase, primase-associated factor, helicase, and ssDNA-binding protein. Additionally, the polymerase contains an intrinsic ribonuclease H (RNase H) activity that specifically degrades RNA/DNA heteroduplexes or duplex DNA substrates in the 5' to 3' direction. Therefore, it can catalyze the excision of the RNA primers that initiate the synthesis of Okazaki fragments at a replication fork during viral DNA replication. This chain is DNA polymerase catalytic subunit, found in Human herpesvirus 1 (strain KOS) (HHV-1).